A 68-amino-acid chain; its full sequence is Conotoxin PnMLKM-011 (68 aa).

Residues 1 to 17 (MGVVLFIFLVLFPLATL) form the signal peptide. A propeptide spanning residues 18–51 (QLDPDQPVERYAENKQLLNPDERRGIILHALGQR) is cleaved from the precursor. 3 disulfides stabilise this stretch: C53–C65, C54–C63, and C59–C66. L67 carries the post-translational modification Leucine amide.

Belongs to the conotoxin M superfamily. Expressed by the venom duct.

It localises to the secreted. In Conus pennaceus (Feathered cone), this protein is Conotoxin PnMLKM-011.